We begin with the raw amino-acid sequence, 147 residues long: Hemoglobin subunit epsilon-Y2 (147 aa).

Positions 3-147 constitute a Globin domain; that stretch reads NFTAEEKTLI…VATALSHKYH (145 aa). Phosphoserine is present on Ser51. His64 and His93 together coordinate heme b.

Belongs to the globin family. In terms of tissue distribution, high expression in yolk sac blood islands, fetal liver, and embryonic erythrocytes. Very low levels in adult liver and spleen.

Hemoglobin epsilon chain is a beta-type chain found in early embryos. In Mus musculus (Mouse), this protein is Hemoglobin subunit epsilon-Y2 (Hbb-y).